A 317-amino-acid polypeptide reads, in one-letter code: Sulfate adenylyltransferase subunit 2 (317 aa).

2 disordered regions span residues 1–21 (MPDS…APLD) and 298–317 (RAID…EGYF).

It belongs to the PAPS reductase family. CysD subfamily. In terms of assembly, heterodimer composed of CysD, the smaller subunit, and CysN.

It carries out the reaction sulfate + ATP + H(+) = adenosine 5'-phosphosulfate + diphosphate. The protein operates within sulfur metabolism; hydrogen sulfide biosynthesis; sulfite from sulfate: step 1/3. With CysN forms the ATP sulfurylase (ATPS) that catalyzes the adenylation of sulfate producing adenosine 5'-phosphosulfate (APS) and diphosphate, the first enzymatic step in sulfur assimilation pathway. APS synthesis involves the formation of a high-energy phosphoric-sulfuric acid anhydride bond driven by GTP hydrolysis by CysN coupled to ATP hydrolysis by CysD. This Rhizobium etli (strain CIAT 652) protein is Sulfate adenylyltransferase subunit 2.